Reading from the N-terminus, the 424-residue chain is ATP-dependent RNA helicase WM6 (424 aa).

Acidic residues predominate over residues 1–16 (MADNDDLLDYEDEEQT). The segment at 1 to 27 (MADNDDLLDYEDEEQTETTAVENQEAP) is disordered. A Q motif motif is present at residues 41 to 69 (SGFRDFLLKPEILRAIVDCGFEHPSEVQH). In terms of domain architecture, Helicase ATP-binding spans 72 to 246 (IPQAVLGMDI…KKFMQDPMEV (175 aa)). 85-92 (AKSGMGKT) provides a ligand contact to ATP. Positions 193-196 (DECD) match the DECD box motif. One can recognise a Helicase C-terminal domain in the interval 258-419 (GLQQHYVNLK…ELPEEIDLST (162 aa)).

It belongs to the DEAD box helicase family. DECD subfamily. Component of the spliceosome. Interacts with the exon junction complex.

It is found in the nucleus speckle. The enzyme catalyses ATP + H2O = ADP + phosphate + H(+). In terms of biological role, required for mRNA export out of the nucleus. Probable RNA helicase that may regulate entry into mitosis by down-regulating the expression of other genes whose activity may be rate-limiting for entry into mitosis during embryogenesis. Binds to salivary gland chromosomes and modifies position effect variegation. Promotes an open chromatin structure that favors transcription during development by regulating the spread of heterochromatin. This Drosophila melanogaster (Fruit fly) protein is ATP-dependent RNA helicase WM6 (Hel25E).